A 764-amino-acid polypeptide reads, in one-letter code: Dehydrocurvularin biosynthesis regulator (764 aa).

Residues 28–59 constitute a DNA-binding region (zn(2)-C6 fungal-type); the sequence is CWECKRRKMKCIFDPRITSTSCNGCRQRGSPC. 3 disordered regions span residues 73-94, 112-136, and 633-672; these read HGAN…SDDA, YRYL…ASTC, and FPTS…PALS. Positions 77-88 are enriched in polar residues; sequence DSASLDASTPIA. Residues 663–672 are compositionally biased toward polar residues; it reads HPNTPSPALS.

It localises to the nucleus. Transcription factor involved in regulation of the dehydrocurvularin biosynthesis gene cluster. The polypeptide is Dehydrocurvularin biosynthesis regulator (Alternaria cinerariae).